Reading from the N-terminus, the 246-residue chain is E3 ubiquitin-protein ligase MARCHF2 (246 aa).

An RING-CH-type zinc finger spans residues 56–116 (DSQSDCPFCR…ELCHTEFAVE (61 aa)). The Zn(2+) site is built by Cys64, Cys67, Cys80, Cys82, His90, Cys93, Cys106, and Cys109. Residues 121-246 (PLTEWLKDPG…LKKVAEETPV (126 aa)) are required for interaction with IKBKG. The next 2 membrane-spanning stretches (helical) occupy residues 138–158 (LCCD…SGWL) and 175–195 (AVGL…WTLV).

As to quaternary structure, interacts with STX6; the interaction promotes MARCHF2-mediated ubiquitination and degradation of CFTR. Interacts with MARCHF3. Interacts with GOPC/CAL; the interaction leads to CFTR ubiquitination and degradation. Interacts with CFTR; the interaction leads to CFTR ubiqtuitination and degradation. Interacts (via PDZ domain) with DLG1 (via PDZ domains); the interaction leads to DLG1 ubiqtuitination and degradation. Interacts with ERGIC3. Interacts with ADRB2. Interacts with IKBKG/NEMO; during the late stages of macrophage viral and bacterial infection; the interaction leads to ubiquitination and degradation of IKBKG/NEMO.

Its subcellular location is the endoplasmic reticulum membrane. It is found in the lysosome membrane. It localises to the endosome membrane. The protein localises to the golgi apparatus membrane. The protein resides in the cytoplasm. Its subcellular location is the cell membrane. It carries out the reaction S-ubiquitinyl-[E2 ubiquitin-conjugating enzyme]-L-cysteine + [acceptor protein]-L-lysine = [E2 ubiquitin-conjugating enzyme]-L-cysteine + N(6)-ubiquitinyl-[acceptor protein]-L-lysine.. Its pathway is protein modification; protein ubiquitination. Its function is as follows. E3 ubiquitin-protein ligase that may mediate ubiquitination of TFRC and CD86, and promote their subsequent endocytosis and sorting to lysosomes via multivesicular bodies. E3 ubiquitin ligases accept ubiquitin from an E2 ubiquitin-conjugating enzyme in the form of a thioester and then directly transfer the ubiquitin to targeted substrates. Together with GOPC/CAL mediates the ubiquitination and lysosomal degradation of CFTR. Ubiquitinates and therefore mediates the degradation of DLG1. Regulates the intracellular trafficking and secretion of alpha1-antitrypsin/SERPINA1 and HP/haptoglobin via ubiquitination and degradation of the cargo receptor ERGIC3. Negatively regulates the antiviral and antibacterial immune response by repression of the NF-kB and type 1 IFN signaling pathways, via MARCHF2-mediated K48-linked polyubiquitination of IKBKG/NEMO, resulting in its proteasomal degradation. May be involved in endosomal trafficking through interaction with STX6. This is E3 ubiquitin-protein ligase MARCHF2 (Marchf2) from Mus musculus (Mouse).